We begin with the raw amino-acid sequence, 448 residues long: Signal recognition particle protein (448 aa).

Residues 101 to 108, 182 to 186, and 240 to 243 each bind GTP; these read GLQGSGKT, DSAGR, and SKFD.

This sequence belongs to the GTP-binding SRP family. SRP54 subfamily. As to quaternary structure, part of the signal recognition particle protein translocation system, which is composed of SRP and FtsY. SRP is a ribonucleoprotein composed of Ffh and a 4.5S RNA molecule.

The protein localises to the cytoplasm. The enzyme catalyses GTP + H2O = GDP + phosphate + H(+). Its function is as follows. Involved in targeting and insertion of nascent membrane proteins into the cytoplasmic membrane. Binds to the hydrophobic signal sequence of the ribosome-nascent chain (RNC) as it emerges from the ribosomes. The SRP-RNC complex is then targeted to the cytoplasmic membrane where it interacts with the SRP receptor FtsY. Interaction with FtsY leads to the transfer of the RNC complex to the Sec translocase for insertion into the membrane, the hydrolysis of GTP by both Ffh and FtsY, and the dissociation of the SRP-FtsY complex into the individual components. This is Signal recognition particle protein from Helicobacter pylori (strain J99 / ATCC 700824) (Campylobacter pylori J99).